Consider the following 124-residue polypeptide: Small ribosomal subunit protein uS12 (124 aa).

Asp89 is subject to 3-methylthioaspartic acid.

Belongs to the universal ribosomal protein uS12 family. In terms of assembly, part of the 30S ribosomal subunit. Contacts proteins S8 and S17. May interact with IF1 in the 30S initiation complex.

In terms of biological role, with S4 and S5 plays an important role in translational accuracy. Its function is as follows. Interacts with and stabilizes bases of the 16S rRNA that are involved in tRNA selection in the A site and with the mRNA backbone. Located at the interface of the 30S and 50S subunits, it traverses the body of the 30S subunit contacting proteins on the other side and probably holding the rRNA structure together. The combined cluster of proteins S8, S12 and S17 appears to hold together the shoulder and platform of the 30S subunit. The chain is Small ribosomal subunit protein uS12 from Vibrio atlanticus (strain LGP32) (Vibrio splendidus (strain Mel32)).